The primary structure comprises 264 residues: Glutamate racemase (264 aa).

Substrate contacts are provided by residues 10-11 (DS) and 42-43 (YG). Catalysis depends on Cys-73, which acts as the Proton donor/acceptor. 74–75 (NT) provides a ligand contact to substrate. Cys-183 acts as the Proton donor/acceptor in catalysis. 184–185 (TH) lines the substrate pocket.

This sequence belongs to the aspartate/glutamate racemases family.

It catalyses the reaction L-glutamate = D-glutamate. It participates in cell wall biogenesis; peptidoglycan biosynthesis. In terms of biological role, provides the (R)-glutamate required for cell wall biosynthesis. The sequence is that of Glutamate racemase from Streptococcus agalactiae serotype Ia (strain ATCC 27591 / A909 / CDC SS700).